Here is a 578-residue protein sequence, read N- to C-terminus: Isocitrate dehydrogenase kinase/phosphatase (578 aa).

Residues 315–321 and Lys336 contribute to the ATP site; that span reads APGIRGM. Asp371 is a catalytic residue.

It belongs to the AceK family.

It is found in the cytoplasm. It catalyses the reaction L-seryl-[isocitrate dehydrogenase] + ATP = O-phospho-L-seryl-[isocitrate dehydrogenase] + ADP + H(+). In terms of biological role, bifunctional enzyme which can phosphorylate or dephosphorylate isocitrate dehydrogenase (IDH) on a specific serine residue. This is a regulatory mechanism which enables bacteria to bypass the Krebs cycle via the glyoxylate shunt in response to the source of carbon. When bacteria are grown on glucose, IDH is fully active and unphosphorylated, but when grown on acetate or ethanol, the activity of IDH declines drastically concomitant with its phosphorylation. The chain is Isocitrate dehydrogenase kinase/phosphatase from Escherichia coli (strain ATCC 8739 / DSM 1576 / NBRC 3972 / NCIMB 8545 / WDCM 00012 / Crooks).